A 106-amino-acid chain; its full sequence is MIEITQPAQEAIKAAIEGAGQPVAGLRLMVQAGGCAGLKYGMALELEAQPDDASLTFGEVTVLIDPLTREHIEGTKIDFVSNLEGAGFTFDNPNAKSACGCGKSFC.

Belongs to the HesB/IscA family.

This is an uncharacterized protein from Rhodobacter capsulatus (Rhodopseudomonas capsulata).